The following is a 1110-amino-acid chain: Sex-determining transformer protein 1 (1110 aa).

2 disordered regions span residues methionine 1–serine 103 and threonine 170–methionine 202. Basic and acidic residues predominate over residues glycine 44 to proline 61. Residues glycine 65–glutamine 90 show a composition bias toward polar residues. Residues asparagine 188 to aspartate 201 are compositionally biased toward low complexity. The C2H2-type 1; low DNA-binding affinity zinc-finger motif lies at leucine 208–histidine 233. The segment at tryptophan 244 to histidine 270 adopts a C2H2-type 2; low DNA-binding affinity zinc-finger fold. 3 C2H2-type zinc fingers span residues asparagine 276–histidine 300, tyrosine 306–histidine 331, and tyrosine 337–histidine 362. 4 disordered regions span residues glycine 363–histidine 397, glutamate 594–glutamate 682, arginine 875–arginine 895, and glutamine 1057–phenylalanine 1110. Residues proline 597–proline 606 are compositionally biased toward low complexity. A compositionally biased stretch (gly residues) spans glycine 641–glycine 652. Residues proline 669–serine 678 show a composition bias toward polar residues. Residues arginine 886–arginine 895 are compositionally biased toward basic and acidic residues. The span at glutamine 1057 to serine 1066 shows a compositional bias: polar residues. Residues alanine 1076–proline 1086 are compositionally biased toward pro residues. The span at serine 1092 to proline 1103 shows a compositional bias: basic and acidic residues.

This sequence belongs to the GLI C2H2-type zinc-finger protein family. Interacts with the MX regulatory domain of tra-2. In terms of tissue distribution, expressed in intestine and gonads (at protein level).

It is found in the cytoplasm. The protein localises to the nucleus. In terms of biological role, plays a major role in controlling sexual phenotype. Terminal global regulator in a well-characterized cascade of sex-determining genes. Promotes female development. Interacts with tra-2 to promote spermatogenesis. Promotes spermatogenesis through the Tip60 HAT complex and by regulating the expression of genes, such as fog-3, required for male development. Association with chromatin and at the fog-3 promoter requires wdr-5.1, and may also require wdr-5.2. With trr-1, activates the fog-3 gene to determine sperm/oocyte cell fate. In hermaphrodites, binds to an intronic regulatory site in the ceh-30 gene, preventing ceh-30 transcription and thereby preventing survival of the CEM (cephalic male) sensory neurons. Represses the expression of the transcription factor dmd-3 in hermaphrodites to govern the timing and extent of male tail tip morphogenesis. Plays a role in controlling the sex-specific differentiation of PHC sensory neurons and represses the development of male-specific morphological features. This is Sex-determining transformer protein 1 from Caenorhabditis elegans.